The chain runs to 368 residues: MTSVDINNNNNNNNNSNSNIIETKLIGHKDTVLCISSHNKKEIIASGSDDCTVRIWDLNTNKSIQSIVEGFQGNPVNNVCFDQDFTLYCSYDNIIVSFDLRQPNVILKEFNTQYKFNTEEINQLSFDSKYQYLAACDDSGQTKIIDVTKNKLVESLNKKHTNIATGCVFRPNSKNELITSSMDFSIIHWDFLKAKVLHRDTFKEGSLPQNISKSQQQQQETTEPNRMLNPPFVTSVDCSNNSKYVAISMGDGTIVINEISSFKQYLKINSIHKSSIQQVHYPKYLENNYQRLISFGNYDKKIVIWDVSEDMNTKVSSSLLSNDEKNNERIKTWLEHSEKINCLTTSNLKNNAIFVADLSNDLKLLSIQ.

6 WD repeats span residues 27–66 (GHKD…SIQS), 71–108 (FQGN…VILK), 116–155 (FNTE…LVES), 159–199 (KHTN…VLHR), 228–267 (LNPP…QYLK), and 271–315 (IHKS…NTKV). Residues 207 to 231 (LPQNISKSQQQQQETTEPNRMLNPP) form a disordered region.

Belongs to the WD repeat WDR53 family.

This is WD repeat-containing protein 53 homolog (wdr53) from Dictyostelium discoideum (Social amoeba).